We begin with the raw amino-acid sequence, 544 residues long: CTP synthase (544 aa).

Positions 1–266 (MKYIFVTGGV…GKAVEELLGL (266 aa)) are amidoligase domain. Residue serine 12 participates in CTP binding. Serine 12 contributes to the UTP binding site. 13–18 (SLGKGV) provides a ligand contact to ATP. Tyrosine 53 is a binding site for L-glutamine. Aspartate 70 is a binding site for ATP. Positions 70 and 140 each coordinate Mg(2+). Residues 147–149 (DIE), 187–192 (KTKPTQ), and lysine 223 each bind CTP. Residues 187 to 192 (KTKPTQ) and lysine 223 contribute to the UTP site. A Glutamine amidotransferase type-1 domain is found at 291-544 (TIAIAGKYTA…VKAALEHQQQ (254 aa)). Residue glycine 356 participates in L-glutamine binding. Cysteine 383 functions as the Nucleophile; for glutamine hydrolysis in the catalytic mechanism. Residues 384-387 (LGMQ), glutamate 407, and arginine 467 each bind L-glutamine. Catalysis depends on residues histidine 517 and glutamate 519.

Belongs to the CTP synthase family. Homotetramer.

It catalyses the reaction UTP + L-glutamine + ATP + H2O = CTP + L-glutamate + ADP + phosphate + 2 H(+). The enzyme catalyses L-glutamine + H2O = L-glutamate + NH4(+). The catalysed reaction is UTP + NH4(+) + ATP = CTP + ADP + phosphate + 2 H(+). The protein operates within pyrimidine metabolism; CTP biosynthesis via de novo pathway; CTP from UDP: step 2/2. Its activity is regulated as follows. Allosterically activated by GTP, when glutamine is the substrate; GTP has no effect on the reaction when ammonia is the substrate. The allosteric effector GTP functions by stabilizing the protein conformation that binds the tetrahedral intermediate(s) formed during glutamine hydrolysis. Inhibited by the product CTP, via allosteric rather than competitive inhibition. Catalyzes the ATP-dependent amination of UTP to CTP with either L-glutamine or ammonia as the source of nitrogen. Regulates intracellular CTP levels through interactions with the four ribonucleotide triphosphates. In Deinococcus radiodurans (strain ATCC 13939 / DSM 20539 / JCM 16871 / CCUG 27074 / LMG 4051 / NBRC 15346 / NCIMB 9279 / VKM B-1422 / R1), this protein is CTP synthase.